The sequence spans 144 residues: Large ribosomal subunit protein uL15 (144 aa).

Positions 1–52 (MRLNSLSPAEGAKHSAKRLGRGISSGLGKTGGRGHKGQKSRTGGGVRRGFEG) are disordered.

This sequence belongs to the universal ribosomal protein uL15 family. As to quaternary structure, part of the 50S ribosomal subunit.

Its function is as follows. Binds to the 23S rRNA. The protein is Large ribosomal subunit protein uL15 of Actinobacillus pleuropneumoniae serotype 7 (strain AP76).